The primary structure comprises 348 residues: Photosystem II protein D1 (348 aa).

The next 3 membrane-spanning stretches (helical) occupy residues 33-50 (YIGW…LATV), 122-137 (HFIL…EWEF), and 146-160 (WIFV…AASA). Residue histidine 122 coordinates chlorophyll a. Tyrosine 130 provides a ligand contact to pheophytin a. [CaMn4O5] cluster is bound by residues aspartate 174 and glutamate 193. Residues 201–222 (FHILGVAAVFGGSLFSAMHGSL) form a helical membrane-spanning segment. Histidine 202 is a chlorophyll a binding site. Residues histidine 219 and 268-269 (SF) each bind a quinone. Residue histidine 219 participates in Fe cation binding. Histidine 276 contacts Fe cation. A helical transmembrane segment spans residues 278 to 292 (FLAAWPVIGIWFTAL). [CaMn4O5] cluster-binding residues include histidine 336, glutamate 337, aspartate 346, and alanine 348.

The protein belongs to the reaction center PufL/M/PsbA/D family. As to quaternary structure, PSII is composed of 1 copy each of membrane proteins PsbA, PsbB, PsbC, PsbD, PsbE, PsbF, PsbH, PsbI, PsbJ, PsbK, PsbL, PsbM, PsbT, PsbX, PsbY, PsbZ, Psb30/Ycf12, at least 3 peripheral proteins of the oxygen-evolving complex and a large number of cofactors. It forms dimeric complexes. It depends on The D1/D2 heterodimer binds P680, chlorophylls that are the primary electron donor of PSII, and subsequent electron acceptors. It shares a non-heme iron and each subunit binds pheophytin, quinone, additional chlorophylls, carotenoids and lipids. D1 provides most of the ligands for the Mn4-Ca-O5 cluster of the oxygen-evolving complex (OEC). There is also a Cl(-1) ion associated with D1 and D2, which is required for oxygen evolution. The PSII complex binds additional chlorophylls, carotenoids and specific lipids. as a cofactor. Tyr-165 forms a radical intermediate that is referred to as redox-active TyrZ, YZ or Y-Z.

The protein resides in the plastid. It localises to the chloroplast thylakoid membrane. The enzyme catalyses 2 a plastoquinone + 4 hnu + 2 H2O = 2 a plastoquinol + O2. Functionally, photosystem II (PSII) is a light-driven water:plastoquinone oxidoreductase that uses light energy to abstract electrons from H(2)O, generating O(2) and a proton gradient subsequently used for ATP formation. It consists of a core antenna complex that captures photons, and an electron transfer chain that converts photonic excitation into a charge separation. The D1/D2 (PsbA/PsbD) reaction center heterodimer binds P680, the primary electron donor of PSII as well as several subsequent electron acceptors. In Heterocapsa pygmaea (Dinoflagellate), this protein is Photosystem II protein D1.